We begin with the raw amino-acid sequence, 480 residues long: UDP-N-acetylmuramoylalanine--D-glutamate ligase (480 aa).

110–116 (GTNGKST) is an ATP binding site.

It belongs to the MurCDEF family.

It localises to the cytoplasm. It catalyses the reaction UDP-N-acetyl-alpha-D-muramoyl-L-alanine + D-glutamate + ATP = UDP-N-acetyl-alpha-D-muramoyl-L-alanyl-D-glutamate + ADP + phosphate + H(+). It participates in cell wall biogenesis; peptidoglycan biosynthesis. Cell wall formation. Catalyzes the addition of glutamate to the nucleotide precursor UDP-N-acetylmuramoyl-L-alanine (UMA). The sequence is that of UDP-N-acetylmuramoylalanine--D-glutamate ligase from Synechococcus sp. (strain JA-2-3B'a(2-13)) (Cyanobacteria bacterium Yellowstone B-Prime).